We begin with the raw amino-acid sequence, 144 residues long: 3-dehydroquinate dehydratase (144 aa).

Tyrosine 24 serves as the catalytic Proton acceptor. Substrate contacts are provided by asparagine 76, histidine 82, and aspartate 89. Histidine 102 functions as the Proton donor in the catalytic mechanism. Residues 103-104 and arginine 113 contribute to the substrate site; that span reads LS.

Belongs to the type-II 3-dehydroquinase family. Homododecamer.

It catalyses the reaction 3-dehydroquinate = 3-dehydroshikimate + H2O. The protein operates within metabolic intermediate biosynthesis; chorismate biosynthesis; chorismate from D-erythrose 4-phosphate and phosphoenolpyruvate: step 3/7. Catalyzes a trans-dehydration via an enolate intermediate. The protein is 3-dehydroquinate dehydratase of Bordetella bronchiseptica (strain ATCC BAA-588 / NCTC 13252 / RB50) (Alcaligenes bronchisepticus).